Consider the following 60-residue polypeptide: UPF0434 protein KPK_3615 (60 aa).

This sequence belongs to the UPF0434 family.

The chain is UPF0434 protein KPK_3615 from Klebsiella pneumoniae (strain 342).